The sequence spans 110 residues: DNA-binding protein Pars_1791 (110 aa).

Belongs to the PDCD5 family.

This Pyrobaculum arsenaticum (strain DSM 13514 / JCM 11321 / PZ6) protein is DNA-binding protein Pars_1791.